The following is a 106-amino-acid chain: NADH-quinone oxidoreductase subunit K (106 aa).

3 helical membrane-spanning segments follow: residues 10-30 (IHYY…GVMV), 35-55 (VLIF…FVTF), and 67-87 (VVFF…AIVI).

The protein belongs to the complex I subunit 4L family. NDH-1 is composed of 14 different subunits. Subunits NuoA, H, J, K, L, M, N constitute the membrane sector of the complex.

Its subcellular location is the cell inner membrane. The catalysed reaction is a quinone + NADH + 5 H(+)(in) = a quinol + NAD(+) + 4 H(+)(out). Functionally, NDH-1 shuttles electrons from NADH, via FMN and iron-sulfur (Fe-S) centers, to quinones in the respiratory chain. The immediate electron acceptor for the enzyme in this species is believed to be ubiquinone. Couples the redox reaction to proton translocation (for every two electrons transferred, four hydrogen ions are translocated across the cytoplasmic membrane), and thus conserves the redox energy in a proton gradient. The polypeptide is NADH-quinone oxidoreductase subunit K (Leptospira borgpetersenii serovar Hardjo-bovis (strain JB197)).